The following is a 193-amino-acid chain: NADH-quinone oxidoreductase subunit B (193 aa).

Positions 72, 73, 137, and 167 each coordinate [4Fe-4S] cluster.

This sequence belongs to the complex I 20 kDa subunit family. In terms of assembly, NDH-1 is composed of 14 different subunits. Subunits NuoB, C, D, E, F, and G constitute the peripheral sector of the complex. The cofactor is [4Fe-4S] cluster.

The protein localises to the cell inner membrane. The catalysed reaction is a quinone + NADH + 5 H(+)(in) = a quinol + NAD(+) + 4 H(+)(out). Its function is as follows. NDH-1 shuttles electrons from NADH, via FMN and iron-sulfur (Fe-S) centers, to quinones in the respiratory chain. The immediate electron acceptor for the enzyme in this species is believed to be ubiquinone. Couples the redox reaction to proton translocation (for every two electrons transferred, four hydrogen ions are translocated across the cytoplasmic membrane), and thus conserves the redox energy in a proton gradient. This chain is NADH-quinone oxidoreductase subunit B, found in Phenylobacterium zucineum (strain HLK1).